A 454-amino-acid polypeptide reads, in one-letter code: Allantoinase (454 aa).

6 residues coordinate Zn(2+): histidine 59, histidine 61, lysine 150, histidine 190, histidine 246, and aspartate 319. At lysine 150 the chain carries N6-carboxylysine.

Belongs to the metallo-dependent hydrolases superfamily. Allantoinase family. Homotetramer. The cofactor is Zn(2+). Carboxylation allows a single lysine to coordinate two zinc ions.

The enzyme catalyses (S)-allantoin + H2O = allantoate + H(+). It functions in the pathway nitrogen metabolism; (S)-allantoin degradation; allantoate from (S)-allantoin: step 1/1. Functionally, catalyzes the conversion of allantoin (5-ureidohydantoin) to allantoic acid by hydrolytic cleavage of the five-member hydantoin ring. The sequence is that of Allantoinase from Bacillus licheniformis (strain ATCC 14580 / DSM 13 / JCM 2505 / CCUG 7422 / NBRC 12200 / NCIMB 9375 / NCTC 10341 / NRRL NRS-1264 / Gibson 46).